The primary structure comprises 130 residues: UPF0212 protein TSIB_1358 (130 aa).

The protein belongs to the UPF0212 family.

This chain is UPF0212 protein TSIB_1358, found in Thermococcus sibiricus (strain DSM 12597 / MM 739).